The following is a 391-amino-acid chain: 2,4,6-trihydroxybenzophenone synthase (391 aa).

C165 is an active-site residue.

It belongs to the thiolase-like superfamily. Chalcone/stilbene synthases family. Homodimer. Expressed in young fruit pericarp.

It catalyses the reaction benzoyl-CoA + 3 malonyl-CoA + 2 H(+) = 2,4,6-trihydroxybenzophenone + 3 CO2 + 4 CoA. In terms of biological role, type III polyketide synthase involved in the biosynthesis of benzophenones and xanthones. Produces mainly 2,4,6-trihydroxybenzophenone together with minor amounts of tetraketide lactone, triketide lactone and diketide lactone. The preferred substrate is benzoyl-CoA, but can also use acetyl-CoA, phenylacetyl-CoA, hexanoyl-CoA, cinnamoyl-CoA, p-coumaroyl-CoA and salicoyl-CoA. The protein is 2,4,6-trihydroxybenzophenone synthase (BPS) of Garcinia mangostana (Mangosteen).